The following is a 321-amino-acid chain: Cytochrome c biogenesis protein CcsA (321 aa).

A run of 8 helical transmembrane segments spans residues 17-37, 43-63, 71-91, 98-118, 143-163, 225-245, 258-275, and 286-306; these read IVSI…IVGL, KGMI…WIYS, LYES…VPKI, LSAI…SGLL, MVLS…LLVI, VISL…VWAN, ETWA…LHTR, and AIVA…VNLL.

This sequence belongs to the CcmF/CycK/Ccl1/NrfE/CcsA family. As to quaternary structure, may interact with Ccs1.

The protein resides in the plastid. Its subcellular location is the chloroplast thylakoid membrane. Required during biogenesis of c-type cytochromes (cytochrome c6 and cytochrome f) at the step of heme attachment. This chain is Cytochrome c biogenesis protein CcsA, found in Platanus occidentalis (Sycamore).